The primary structure comprises 172 residues: RNA pyrophosphohydrolase (172 aa).

The region spanning glycine 6 to lysine 149 is the Nudix hydrolase domain. Residues glycine 38–glycine 59 carry the Nudix box motif.

It belongs to the Nudix hydrolase family. RppH subfamily. A divalent metal cation is required as a cofactor.

In terms of biological role, accelerates the degradation of transcripts by removing pyrophosphate from the 5'-end of triphosphorylated RNA, leading to a more labile monophosphorylated state that can stimulate subsequent ribonuclease cleavage. The polypeptide is RNA pyrophosphohydrolase (Vibrio vulnificus (strain CMCP6)).